A 431-amino-acid chain; its full sequence is tRNA-2-methylthio-N(6)-dimethylallyladenosine synthase (431 aa).

Positions 2–117 (KKLFIETLGC…ITEVVDKKHA (116 aa)) constitute an MTTase N-terminal domain. 6 residues coordinate [4Fe-4S] cluster: Cys-11, Cys-48, Cys-80, Cys-149, Cys-153, and Cys-156. The region spanning 135–368 (RTNPFKAMVN…QTRHTEILDE (234 aa)) is the Radical SAM core domain. The region spanning 371–431 (DAQLGKVHEV…SRGALDGVLV (61 aa)) is the TRAM domain.

Belongs to the methylthiotransferase family. MiaB subfamily. Monomer. Requires [4Fe-4S] cluster as cofactor.

The protein resides in the cytoplasm. It catalyses the reaction N(6)-dimethylallyladenosine(37) in tRNA + (sulfur carrier)-SH + AH2 + 2 S-adenosyl-L-methionine = 2-methylsulfanyl-N(6)-dimethylallyladenosine(37) in tRNA + (sulfur carrier)-H + 5'-deoxyadenosine + L-methionine + A + S-adenosyl-L-homocysteine + 2 H(+). Functionally, catalyzes the methylthiolation of N6-(dimethylallyl)adenosine (i(6)A), leading to the formation of 2-methylthio-N6-(dimethylallyl)adenosine (ms(2)i(6)A) at position 37 in tRNAs that read codons beginning with uridine. The polypeptide is tRNA-2-methylthio-N(6)-dimethylallyladenosine synthase (Sulfurovum sp. (strain NBC37-1)).